The sequence spans 516 residues: Gamma-aminobutyrate transaminase 1, mitochondrial (516 aa).

The transit peptide at 1-47 (MVIARGLLRSNASSSSSQAINLLKYVTSTGSLQGHTQNLCDASTRHF) directs the protein to the mitochondrion. 171–172 (GS) contacts pyridoxal 5'-phosphate. Tyrosine 204 contacts substrate. Aspartate 311 lines the pyridoxal 5'-phosphate pocket. Lysine 340 provides a ligand contact to substrate. An N6-(pyridoxal phosphate)lysine modification is found at lysine 340.

Belongs to the class-III pyridoxal-phosphate-dependent aminotransferase family. As to expression, expressed in roots, stems and panicles.

It localises to the mitochondrion. The catalysed reaction is 4-aminobutanoate + pyruvate = succinate semialdehyde + L-alanine. The enzyme catalyses 4-aminobutanoate + glyoxylate = succinate semialdehyde + glycine. Transaminase that degrades gamma-amino butyric acid (GABA) and uses pyruvate as amino-group acceptor, but not 2-oxoglutarate. Not involved in the interaction with blast fungus. This chain is Gamma-aminobutyrate transaminase 1, mitochondrial (OSL2), found in Oryza sativa subsp. japonica (Rice).